A 409-amino-acid chain; its full sequence is Translation initiation factor 2 subunit gamma (409 aa).

Positions 7–203 (QPEVNIGLVG…AIEREIPTPE (197 aa)) constitute a tr-type G domain. The G1 stretch occupies residues 16–23 (GHVDHGKT). Residues Asp19, Thr23, Gly44, and Ser46 each contribute to the Mg(2+) site. 19–24 (DHGKTT) is a binding site for GTP. Residues 44 to 48 (GISIR) form a G2 region. The interval 90-93 (DAPG) is G3. GTP-binding positions include 146–149 (NKID) and 181–183 (SAQ). Positions 146–149 (NKID) are G4. Residues 181–183 (SAQ) are G5.

The protein belongs to the TRAFAC class translation factor GTPase superfamily. Classic translation factor GTPase family. EIF2G subfamily. As to quaternary structure, heterotrimer composed of an alpha, a beta and a gamma chain. Mg(2+) serves as cofactor.

The enzyme catalyses GTP + H2O = GDP + phosphate + H(+). Its function is as follows. eIF-2 functions in the early steps of protein synthesis by forming a ternary complex with GTP and initiator tRNA. This chain is Translation initiation factor 2 subunit gamma, found in Haloquadratum walsbyi (strain DSM 16790 / HBSQ001).